Reading from the N-terminus, the 247-residue chain is Segregation and condensation protein A (247 aa).

The protein belongs to the ScpA family. In terms of assembly, component of a cohesin-like complex composed of ScpA, ScpB and the Smc homodimer, in which ScpA and ScpB bind to the head domain of Smc. The presence of the three proteins is required for the association of the complex with DNA.

Its subcellular location is the cytoplasm. Functionally, participates in chromosomal partition during cell division. May act via the formation of a condensin-like complex containing Smc and ScpB that pull DNA away from mid-cell into both cell halves. The polypeptide is Segregation and condensation protein A (Mycoplasma mobile (strain ATCC 43663 / 163K / NCTC 11711) (Mesomycoplasma mobile)).